Consider the following 173-residue polypeptide: Large ribosomal subunit protein uL29c (173 aa).

Residues 1-60 (MLSLSIATPGTAAIFRRGTASATSTSSSFHGVRIQHQVSARVPAAATISSSSPKPSVVMM) constitute a chloroplast transit peptide. Residues 143-173 (KKSIVPRPPPSLKKLQEEEAAEEAAEAAKSA) form a disordered region. Ser172 carries the post-translational modification Phosphoserine.

This sequence belongs to the universal ribosomal protein uL29 family. As to quaternary structure, part of the 50S ribosomal subunit.

It localises to the plastid. The protein localises to the chloroplast. This is Large ribosomal subunit protein uL29c (RPL29) from Arabidopsis thaliana (Mouse-ear cress).